The sequence spans 194 residues: ECF RNA polymerase sigma factor SigX (194 aa).

A Polymerase core binding motif is present at residues 32–45 (DLLQEVYIRVLNSY). Positions 136–155 (IQETAKALRFSESKVKTTQH) form a DNA-binding region, H-T-H motif.

Belongs to the sigma-70 factor family. ECF subfamily. Interacts transiently with the RNAP core.

It localises to the cell membrane. In terms of biological role, sigma factors are initiation factors that promote the attachment of RNA polymerase (RNAP) to specific initiation sites and are then released. May be involved in the regulation of iron metabolism. Associates with RNAP core during early growth phases, association decreases as cells age. The protein is ECF RNA polymerase sigma factor SigX (sigX) of Bacillus subtilis (strain 168).